Consider the following 689-residue polypeptide: Homoaconitase, mitochondrial (689 aa).

The transit peptide at 1–17 (MVVLRRSFHVYTRLQRG) directs the protein to the mitochondrion. Residues C336, C403, and C406 each contribute to the [4Fe-4S] cluster site.

It belongs to the aconitase/IPM isomerase family. The cofactor is [4Fe-4S] cluster.

It is found in the mitochondrion. The enzyme catalyses (2R,3S)-homoisocitrate = cis-homoaconitate + H2O. It participates in amino-acid biosynthesis; L-lysine biosynthesis via AAA pathway; L-alpha-aminoadipate from 2-oxoglutarate: step 3/5. In terms of biological role, catalyzes the reversible hydration of cis-homoaconitate to (2R,3S)-homoisocitrate, a step in the alpha-aminoadipate pathway for lysine biosynthesis. The sequence is that of Homoaconitase, mitochondrial (LYS4) from Candida glabrata (strain ATCC 2001 / BCRC 20586 / JCM 3761 / NBRC 0622 / NRRL Y-65 / CBS 138) (Yeast).